Reading from the N-terminus, the 182-residue chain is Gamma-crystallin N (182 aa).

Beta/gamma crystallin 'Greek key' domains are found at residues 6-46 (GKIT…HVES), 47-89 (GAWV…RPVG), and 95-136 (FRLE…KVYG). The disordered stretch occupies residues 153-182 (LSSSLQSDQGPEEATTKPATTQPPFLTANL). Residues 169–182 (KPATTQPPFLTANL) show a composition bias toward polar residues.

This sequence belongs to the beta/gamma-crystallin family. In terms of assembly, monomer. As to expression, not specifically expressed in eye.

The sequence is that of Gamma-crystallin N from Homo sapiens (Human).